A 492-amino-acid chain; its full sequence is Protein odr-4 homolog (492 aa).

The interval 251–270 is disordered; it reads LQPTSTTGGTATASSNTTDS. A compositionally biased stretch (low complexity) spans 254-268; that stretch reads TSTTGGTATASSNTT. The helical transmembrane segment at 469-489 threads the bilayer; it reads MVGIAVALLVLLSSVALHFVL.

Belongs to the ODR-4 family.

It is found in the membrane. In terms of biological role, may play a role in the trafficking of a subset of G-protein coupled receptors. The chain is Protein odr-4 homolog from Drosophila melanogaster (Fruit fly).